The chain runs to 606 residues: MRGSWYKSVSSVFGLRPRIRGLLFFIVGVVALVTILAPLTSNSYDSSSSSTLVPNIYSNYRRIKEQAAVDYLDLRSLSLGASLKEFPFCGKERESYVPCYNITGNLLAGLQEGEELDRHCEFEREKERCVVRPPRDYKIPLRWPLGRDIIWSGNVKITKDQFLSSGTVTTRLMLLEENQITFHSEDGLVFDGVKDYARQIAEMIGLGSDTEFAQAGVRTVLDIGCGFGSFGAHLVSLKLMPICIAEYEATGSQVQLALERGLPAMIGNFFSKQLPYPALSFDMVHCAQCGTTWDIKDAMLLLEVDRVLKPGGYFVLTSPTNKAQGNLPDTKKTSISTRVNELSKKICWSLTAQQDETFLWQKTSDSSCYSSRSQASIPLCKDGDSVPYYHPLVPCISGTTSKRWISIQNRSAVAGTTSAGLEIHGKSALKNYWSLLTPLIFSDHPKRPGDEDPLPPFNMIRNVMDMHARFGNLNAALLDEGKSAWVMNVVPVNARNTLPIILDRGFAGVLHDWCEPFPTYPRTYDMLHANELLTHLSSERCSLMDLFLEMDRILRPEGWVVLSDKVGVIEMARALAARVRWEARVIDLQDGSDQRLLVCQKPFIKK.

Residues 1–20 (MRGSWYKSVSSVFGLRPRIR) are Cytoplasmic-facing. The chain crosses the membrane as a helical; Signal-anchor for type II membrane protein span at residues 21 to 41 (GLLFFIVGVVALVTILAPLTS). The Lumenal segment spans residues 42 to 606 (NSYDSSSSST…LVCQKPFIKK (565 aa)). N-linked (GlcNAc...) asparagine glycans are attached at residues Asn-101 and Asn-409.

It belongs to the methyltransferase superfamily.

It localises to the endoplasmic reticulum membrane. The chain is Probable methyltransferase PMT5 from Arabidopsis thaliana (Mouse-ear cress).